The following is a 92-amino-acid chain: Small ribosomal subunit protein uS19c (92 aa).

Belongs to the universal ribosomal protein uS19 family.

Its subcellular location is the plastid. The protein resides in the chloroplast. Functionally, protein S19 forms a complex with S13 that binds strongly to the 16S ribosomal RNA. The chain is Small ribosomal subunit protein uS19c from Vitis vinifera (Grape).